Consider the following 342-residue polypeptide: Phosphate acyltransferase (342 aa).

Belongs to the PlsX family. Homodimer. Probably interacts with PlsY.

Its subcellular location is the cytoplasm. The enzyme catalyses a fatty acyl-[ACP] + phosphate = an acyl phosphate + holo-[ACP]. Its pathway is lipid metabolism; phospholipid metabolism. Catalyzes the reversible formation of acyl-phosphate (acyl-PO(4)) from acyl-[acyl-carrier-protein] (acyl-ACP). This enzyme utilizes acyl-ACP as fatty acyl donor, but not acyl-CoA. This is Phosphate acyltransferase from Shewanella sp. (strain MR-4).